The chain runs to 283 residues: Phosphatidylglycerol--prolipoprotein diacylglyceryl transferase (283 aa).

4 consecutive transmembrane segments (helical) span residues 17–37 (LAVR…TFLG), 56–76 (FLTW…VLFY), 92–112 (WEGG…IWLF), and 117–137 (GIGF…GLAS). Arg139 serves as a coordination point for a 1,2-diacyl-sn-glycero-3-phospho-(1'-sn-glycerol). 3 consecutive transmembrane segments (helical) span residues 194–214 (PSQL…VWLF), 222–242 (GQVA…AEFA), and 255–275 (GLSM…VGFV).

This sequence belongs to the Lgt family.

The protein resides in the cell inner membrane. The enzyme catalyses L-cysteinyl-[prolipoprotein] + a 1,2-diacyl-sn-glycero-3-phospho-(1'-sn-glycerol) = an S-1,2-diacyl-sn-glyceryl-L-cysteinyl-[prolipoprotein] + sn-glycerol 1-phosphate + H(+). It participates in protein modification; lipoprotein biosynthesis (diacylglyceryl transfer). Functionally, catalyzes the transfer of the diacylglyceryl group from phosphatidylglycerol to the sulfhydryl group of the N-terminal cysteine of a prolipoprotein, the first step in the formation of mature lipoproteins. This is Phosphatidylglycerol--prolipoprotein diacylglyceryl transferase from Neisseria meningitidis serogroup A / serotype 4A (strain DSM 15465 / Z2491).